Here is a 306-residue protein sequence, read N- to C-terminus: NAD kinase 1 (306 aa).

The Proton acceptor role is filled by D67. NAD(+) is bound by residues 67-68 (DG), 149-150 (NE), D181, and 192-197 (TGYTVS).

The protein belongs to the NAD kinase family. It depends on a divalent metal cation as a cofactor.

Its subcellular location is the cytoplasm. It carries out the reaction NAD(+) + ATP = ADP + NADP(+) + H(+). Functionally, involved in the regulation of the intracellular balance of NAD and NADP, and is a key enzyme in the biosynthesis of NADP. Catalyzes specifically the phosphorylation on 2'-hydroxyl of the adenosine moiety of NAD to yield NADP. This is NAD kinase 1 from Trichormus variabilis (strain ATCC 29413 / PCC 7937) (Anabaena variabilis).